A 443-amino-acid polypeptide reads, in one-letter code: uncharacterized protein (443 aa).

A run of 4 helical transmembrane segments spans residues 15-35 (IYAG…DGLA), 38-58 (LGMA…GPGS), 59-79 (AWQG…LSWL), and 181-201 (VVTA…IPAL). The segment at 231–270 (NFGIGNIGNANLGNGNIGNANLGSGNAGFFNFGNGNDGNT) is 4 X 10 AA approximate repeats.

This sequence belongs to the mycobacterial PPE family.

Its subcellular location is the cell membrane. This is an uncharacterized protein from Mycobacterium tuberculosis (strain ATCC 25618 / H37Rv).